The chain runs to 336 residues: Holliday junction branch migration complex subunit RuvB (336 aa).

Positions 4 to 184 are large ATPase domain (RuvB-L); sequence ADRLISAGTT…FGIVQRLEFY (181 aa). Residues I23, R24, G65, K68, T69, T70, 131–133, R174, Y184, and R221 each bind ATP; that span reads EDY. T69 lines the Mg(2+) pocket. The tract at residues 185 to 255 is small ATPAse domain (RuvB-S); the sequence is QVPDLQYIVS…IAAQALDMLN (71 aa). The segment at 258–336 is head domain (RuvB-H); it reads AEGFDYMDRK…HFGITPPEMP (79 aa). Positions 294, 313, and 318 each coordinate DNA.

This sequence belongs to the RuvB family. In terms of assembly, homohexamer. Forms an RuvA(8)-RuvB(12)-Holliday junction (HJ) complex. HJ DNA is sandwiched between 2 RuvA tetramers; dsDNA enters through RuvA and exits via RuvB. An RuvB hexamer assembles on each DNA strand where it exits the tetramer. Each RuvB hexamer is contacted by two RuvA subunits (via domain III) on 2 adjacent RuvB subunits; this complex drives branch migration. In the full resolvosome a probable DNA-RuvA(4)-RuvB(12)-RuvC(2) complex forms which resolves the HJ.

Its subcellular location is the cytoplasm. It carries out the reaction ATP + H2O = ADP + phosphate + H(+). In terms of biological role, the RuvA-RuvB-RuvC complex processes Holliday junction (HJ) DNA during genetic recombination and DNA repair, while the RuvA-RuvB complex plays an important role in the rescue of blocked DNA replication forks via replication fork reversal (RFR). RuvA specifically binds to HJ cruciform DNA, conferring on it an open structure. The RuvB hexamer acts as an ATP-dependent pump, pulling dsDNA into and through the RuvAB complex. RuvB forms 2 homohexamers on either side of HJ DNA bound by 1 or 2 RuvA tetramers; 4 subunits per hexamer contact DNA at a time. Coordinated motions by a converter formed by DNA-disengaged RuvB subunits stimulates ATP hydrolysis and nucleotide exchange. Immobilization of the converter enables RuvB to convert the ATP-contained energy into a lever motion, pulling 2 nucleotides of DNA out of the RuvA tetramer per ATP hydrolyzed, thus driving DNA branch migration. The RuvB motors rotate together with the DNA substrate, which together with the progressing nucleotide cycle form the mechanistic basis for DNA recombination by continuous HJ branch migration. Branch migration allows RuvC to scan DNA until it finds its consensus sequence, where it cleaves and resolves cruciform DNA. This is Holliday junction branch migration complex subunit RuvB from Escherichia coli (strain ATCC 8739 / DSM 1576 / NBRC 3972 / NCIMB 8545 / WDCM 00012 / Crooks).